Consider the following 55-residue polypeptide: Cicadin (55 aa).

Over residues 1 to 26 (NEYHGFVDKANNENKRKKQQGRDDFV) the composition is skewed to basic and acidic residues. Positions 1–39 (NEYHGFVDKANNENKRKKQQGRDDFVVKPNNFANRRRKD) are disordered.

In terms of biological role, possesses antifungal activity against B.cinerea, M.arachidicola, F.oxysporum, R.solani and C.comatus. Functionally, suppresses the activity of HIV-1 reverse transcriptase and stimulates the proliferation of murine splenocytes. The sequence is that of Cicadin from Cicada flammata.